Consider the following 253-residue polypeptide: Phosphate import ATP-binding protein PstB (253 aa).

Positions Ile5–Val248 constitute an ABC transporter domain. Residue Gly37–Ser44 coordinates ATP.

It belongs to the ABC transporter superfamily. Phosphate importer (TC 3.A.1.7) family. As to quaternary structure, the complex is composed of two ATP-binding proteins (PstB), two transmembrane proteins (PstC and PstA) and a solute-binding protein (PstS).

It is found in the cell membrane. It catalyses the reaction phosphate(out) + ATP + H2O = ADP + 2 phosphate(in) + H(+). Part of the ABC transporter complex PstSACB involved in phosphate import. Responsible for energy coupling to the transport system. The sequence is that of Phosphate import ATP-binding protein PstB from Pyrococcus furiosus (strain ATCC 43587 / DSM 3638 / JCM 8422 / Vc1).